The sequence spans 361 residues: Fructose-bisphosphate aldolase (361 aa).

Serine 63 contacts D-glyceraldehyde 3-phosphate. The active-site Proton donor is aspartate 110. Histidine 111, aspartate 145, glutamate 175, and histidine 227 together coordinate Zn(2+). Glycine 228 contacts dihydroxyacetone phosphate. Histidine 266 contacts Zn(2+). Dihydroxyacetone phosphate is bound by residues glycine 267–serine 269 and asparagine 288–threonine 291.

This sequence belongs to the class II fructose-bisphosphate aldolase family. Homodimer. It depends on Zn(2+) as a cofactor.

It carries out the reaction beta-D-fructose 1,6-bisphosphate = D-glyceraldehyde 3-phosphate + dihydroxyacetone phosphate. Its pathway is carbohydrate degradation; glycolysis; D-glyceraldehyde 3-phosphate and glycerone phosphate from D-glucose: step 4/4. Functionally, catalyzes the aldol condensation of dihydroxyacetone phosphate (DHAP or glycerone-phosphate) with glyceraldehyde 3-phosphate (G3P) to form fructose 1,6-bisphosphate (FBP) in gluconeogenesis and the reverse reaction in glycolysis. In Kluyveromyces lactis (strain ATCC 8585 / CBS 2359 / DSM 70799 / NBRC 1267 / NRRL Y-1140 / WM37) (Yeast), this protein is Fructose-bisphosphate aldolase (FBA1).